A 327-amino-acid chain; its full sequence is Ribosomal RNA small subunit methyltransferase H (327 aa).

S-adenosyl-L-methionine-binding positions include 36 to 38, Asp61, Phe88, Asp114, and Gln121; that span reads GGH.

Belongs to the methyltransferase superfamily. RsmH family.

Its subcellular location is the cytoplasm. It catalyses the reaction cytidine(1402) in 16S rRNA + S-adenosyl-L-methionine = N(4)-methylcytidine(1402) in 16S rRNA + S-adenosyl-L-homocysteine + H(+). Its function is as follows. Specifically methylates the N4 position of cytidine in position 1402 (C1402) of 16S rRNA. This chain is Ribosomal RNA small subunit methyltransferase H, found in Chlorobium phaeovibrioides (strain DSM 265 / 1930) (Prosthecochloris vibrioformis (strain DSM 265)).